We begin with the raw amino-acid sequence, 603 residues long: ATP-dependent lipid A-core flippase (603 aa).

The next 4 membrane-spanning stretches (helical) occupy residues 20–40 (LGYVKPYIGMFLLSIVGFLIF), 79–99 (LVYAVPLLIILIAAWQGLGSF), 170–190 (VFLFLYLLWMNWKLTLVMLAI), and 269–289 (PMLQLVIYVAMAILMFLVLWL). The region spanning 31–324 (LLSIVGFLIF…LSEVSSTVQR (294 aa)) is the ABC transmembrane type-1 domain. The 237-residue stretch at 356-592 (LEVRNLSFRY…NGHYARLHAM (237 aa)) folds into the ABC transporter domain. Position 390–397 (390–397 (GRSGSGKS)) interacts with ATP.

This sequence belongs to the ABC transporter superfamily. Lipid exporter (TC 3.A.1.106) family. In terms of assembly, homodimer.

It is found in the cell inner membrane. It carries out the reaction ATP + H2O + lipid A-core oligosaccharideSide 1 = ADP + phosphate + lipid A-core oligosaccharideSide 2.. Functionally, involved in lipopolysaccharide (LPS) biosynthesis. Translocates lipid A-core from the inner to the outer leaflet of the inner membrane. Transmembrane domains (TMD) form a pore in the inner membrane and the ATP-binding domain (NBD) is responsible for energy generation. This is ATP-dependent lipid A-core flippase from Pseudomonas aeruginosa (strain ATCC 15692 / DSM 22644 / CIP 104116 / JCM 14847 / LMG 12228 / 1C / PRS 101 / PAO1).